The following is a 254-amino-acid chain: Alcohol dehydrogenase (254 aa).

10-33 (FVAGLGGIGLDTSRELVKRDLKNL) provides a ligand contact to NAD(+). Ser-138 provides a ligand contact to substrate. The Proton acceptor role is filled by Tyr-151.

Belongs to the short-chain dehydrogenases/reductases (SDR) family. Homodimer.

The catalysed reaction is a primary alcohol + NAD(+) = an aldehyde + NADH + H(+). The enzyme catalyses a secondary alcohol + NAD(+) = a ketone + NADH + H(+). The chain is Alcohol dehydrogenase (Adh) from Drosophila madeirensis (Fruit fly).